A 526-amino-acid polypeptide reads, in one-letter code: Lysine--tRNA ligase (526 aa).

Residues Glu-431 and Glu-438 each contribute to the Mg(2+) site.

The protein belongs to the class-II aminoacyl-tRNA synthetase family. Homodimer. It depends on Mg(2+) as a cofactor.

The protein localises to the cytoplasm. The enzyme catalyses tRNA(Lys) + L-lysine + ATP = L-lysyl-tRNA(Lys) + AMP + diphosphate. The sequence is that of Lysine--tRNA ligase (lysS) from Chlamydia trachomatis serovar D (strain ATCC VR-885 / DSM 19411 / UW-3/Cx).